The primary structure comprises 203 residues: Twist-related protein 1 (203 aa).

The span at 1 to 18 shows a compositional bias: low complexity; sequence MMQDVSSSPVSPADDSLS. The disordered stretch occupies residues 1-105; the sequence is MMQDVSSSPV…SGGGSPQSYE (105 aa). The span at 34–43 shows a compositional bias: basic residues; it reads RGGRKRRSSR. Gly residues-rich tracts occupy residues 46–65 and 80–100; these read AGGG…GGDE and GCGG…GGGS. The bHLH domain maps to 109–160; sequence TQRVMANVRGRQRTQSLNEAFAALRKIIPTLPSDKLSKIQTLKLAARYIDFL. The tract at residues 162-192 is sufficient for transactivation activity; it reads QVLQSDELDSKMASCSYVAHERLSYAFSVWR.

As to quaternary structure, efficient DNA binding requires dimerization with another bHLH protein. Homodimer or heterodimer with E proteins such as TCF3. ID1 binds preferentially to TCF3 but does not interact efficiently with TWIST1 so ID1 levels control the amount of TCF3 available to dimerize with TWIST and thus determine the type of dimer formed.

It localises to the nucleus. In terms of biological role, acts as a transcriptional regulator. Inhibits myogenesis by sequestrating E proteins, inhibiting trans-activation by MEF2, and inhibiting DNA-binding by MYOD1 through physical interaction. This interaction probably involves the basic domains of both proteins. Also represses expression of pro-inflammatory cytokines such as TNFA and IL1B. Regulates cranial suture patterning and fusion. Activates transcription as a heterodimer with E proteins. Regulates gene expression differentially, depending on dimer composition. Homodimers induce expression of FGFR2 and POSTN while heterodimers repress FGFR2 and POSTN expression and induce THBS1 expression. Heterodimerization is also required for osteoblast differentiation. Represses the activity of the circadian transcriptional activator: NPAS2-BMAL1 heterodimer. The chain is Twist-related protein 1 (TWIST1) from Callithrix jacchus (White-tufted-ear marmoset).